Consider the following 237-residue polypeptide: BTB/POZ domain-containing protein KCTD6 (237 aa).

The interaction with ANK1 isoform Mu17 stretch occupies residues 1 to 104; that stretch reads MDNGDWGYMM…FYQIEPLIQC (104 aa). Residues 10-110 form an interaction with CUL3 region; sequence MTDPVTLNVG…LIQCLNDPKP (101 aa). In terms of domain architecture, BTB spans 12–81; sequence DPVTLNVGGH…LRTSELTLPL (70 aa). The interval 113 to 187 is interaction with USP21; that stretch reads PMDTFEEVVE…TFGPCDYHQE (75 aa).

As to quaternary structure, homopentamer. Interacts with KCTD11; KCTD6 and KCTD11 may associate in pentameric assemblies. Interacts (via BTB domain) with CUL3; initially a 4:4 stoichiometry has been reported, however, electron microscopy revealed pentameric states with a five-pointed pinwheel shape. The interaction with CUL3 is indicative for a participation in a BCR (BTB-CUL3-RBX1) E3 ubiquitin-protein ligase complex. Interacts with HDAC1; probably indirect as the interaction is requires the presence of KCTD11. Interacts with USP21 (preferentially catalytic inactive form). Interacts with ANK1 isoform Mu17; detected in striated muscle. Interacts with USP11. As to expression, highly expressed in cerebellum and brain. Expression is down-regulated in medulloblastoma.

The protein localises to the cytoplasm. It is found in the myofibril. The protein resides in the sarcomere. Its subcellular location is the m line. Its pathway is protein modification; protein ubiquitination. Probable substrate-specific adapter of a BCR (BTB-CUL3-RBX1) E3 ubiquitin-protein ligase complex mediating the ubiquitination and subsequent proteasomal degradation of target proteins. Promotes the ubiquitination of HDAC1; the function seems to depend on KCTD11:KCTD6 oligomerization. Can function as antagonist of the Hedgehog pathway by affecting the nuclear transfer of transcription factor GLI1; the function probably occurs via HDAC1 down-regulation, keeping GLI1 acetylated and inactive. Inhibits cell growth and tumorigenicity of medulloblastoma (MDB). Involved in regulating protein levels of ANK1 isoform Mu17 probably implicating CUL3-dependent proteasomal degradation. The sequence is that of BTB/POZ domain-containing protein KCTD6 (KCTD6) from Homo sapiens (Human).